Here is a 936-residue protein sequence, read N- to C-terminus: VPS35 endosomal protein-sorting factor-like (936 aa).

Disordered stretches follow at residues 43 to 69 (SKTKKVSRKGSTSSTSSSSSSSVVDPL) and 87 to 113 (DPAATVTVTESSRKKRDKDDNSFVGPD). The span at 51 to 69 (KGSTSSTSSSSSSSVVDPL) shows a compositional bias: low complexity. Ser-265 carries the phosphoserine modification. A helical membrane pass occupies residues 672–692 (AFVRACVAYCFITIPSLVGIF).

This sequence belongs to the VPS35L family. In terms of assembly, component of the heterotrimeric retriever complex formed by VPS26C, VPS29 and VPS35L. Interacts with VPS29. Interacts with COMMD1, CCDC93 and CCDC22; associates with the CCC (COMMD/CCDC22/CCDC93) complex which contains at least COMMD1 (and possibly other COMM domain-containing proteins), CCDC22 and CCDC93. Interacts with WASHC1, WASHC2A and WASHC2C. Interacts with SNX17 and SNX31.

Its subcellular location is the membrane. The protein localises to the endosome. Functionally, acts as a component of the retriever complex. The retriever complex is a heterotrimeric complex related to retromer cargo-selective complex (CSC) and essential for retromer-independent retrieval and recycling of numerous cargos such as integrin alpha-5/beta-1 (ITGA5:ITGB1). The recruitment of the retriever complex to the endosomal membrane involves CCC and WASH complexes. In the endosomes, drives the retrieval and recycling of NxxY-motif-containing cargo proteins by coupling to SNX17, a cargo essential for the homeostatic maintenance of numerous cell surface proteins associated with processes that include cell migration, cell adhesion, nutrient supply and cell signaling. Involved in copper-dependent ATP7A trafficking between the trans-Golgi network and vesicles in the cell periphery; the function is proposed to depend on its association with the CCC complex and cooperation with the WASH complex on early endosomes. Seems not to be required for CCC complex stability. This chain is VPS35 endosomal protein-sorting factor-like, found in Rattus norvegicus (Rat).